Reading from the N-terminus, the 1086-residue chain is NAD(P) transhydrogenase, mitochondrial (1086 aa).

The N-terminal 43 residues, Met-1–Trp-43, are a transit peptide targeting the mitochondrion. Residues Cys-44–Ser-474 are Mitochondrial matrix-facing. Residue Lys-70 is modified to N6-acetyllysine. Position 117 is an N6-succinyllysine (Lys-117). An NAD(+)-binding site is contributed by Arg-182–Thr-184. N6-succinyllysine is present on Lys-224. Residues Val-237, Asp-257–Arg-259, and Gly-287 contribute to the NAD(+) site. An N6-succinyllysine modification is found at Lys-294. Positions 300 and 319 each coordinate NAD(+). Lys-331 is modified (N6-succinyllysine). Position 397 is an N6-acetyllysine (Lys-397). 4 helical membrane passes run Thr-475–Ala-493, Met-501–Pro-521, Leu-527–Met-546, and Gly-558–Thr-578. Residues Gln-579–Asn-595 lie on the Mitochondrial matrix side of the membrane. A run of 5 helical transmembrane segments spans residues Tyr-596–Gly-616, Ile-622–Gly-642, Leu-646–Leu-666, Leu-672–Ala-691, and Leu-702–Tyr-722. Over Ile-723–Lys-739 the chain is Cytoplasmic. Transmembrane regions (helical) follow at residues Ile-740–Tyr-760, His-778–Val-797, Phe-801–Gly-819, Val-833–Leu-853, and Leu-857–Ala-879. Residues Met-880 to Lys-1086 lie on the Mitochondrial matrix side of the membrane. NADP(+) contacts are provided by residues Tyr-933, Val-965–Pro-970, Gly-1007–Thr-1011, Gly-1026–Met-1027, Lys-1042–Tyr-1049, and Asp-1068–Ala-1069. Residue Lys-1079 is modified to N6-succinyllysine.

It in the N-terminal section; belongs to the AlaDH/PNT family. In the C-terminal section; belongs to the PNT beta subunit family. Homodimer. As to expression, widely expressed with expression most readily detectable in adrenal, heart, kidney, thyroid and adipose tissues.

It localises to the mitochondrion inner membrane. The catalysed reaction is NAD(+) + NADPH + H(+)(in) = NADH + NADP(+) + H(+)(out). Functionally, the transhydrogenation between NADH and NADP is coupled to respiration and ATP hydrolysis and functions as a proton pump across the membrane. May play a role in reactive oxygen species (ROS) detoxification in the adrenal gland. This Homo sapiens (Human) protein is NAD(P) transhydrogenase, mitochondrial (NNT).